The primary structure comprises 114 residues: Large ribosomal subunit protein bL19 (114 aa).

It belongs to the bacterial ribosomal protein bL19 family.

Its function is as follows. This protein is located at the 30S-50S ribosomal subunit interface and may play a role in the structure and function of the aminoacyl-tRNA binding site. The chain is Large ribosomal subunit protein bL19 from Listeria welshimeri serovar 6b (strain ATCC 35897 / DSM 20650 / CCUG 15529 / CIP 8149 / NCTC 11857 / SLCC 5334 / V8).